The primary structure comprises 640 residues: Uromodulin (640 aa).

A signal peptide spans 1 to 24; that stretch reads MGQPSLTWMLMVVVASWFITTAAT. In terms of domain architecture, EGF-like 1 spans 28 to 64; the sequence is EARWCSECHSNATCTEDEAVTTCTCQEGFTGDGLTCV. 21 cysteine pairs are disulfide-bonded: Cys-32–Cys-41, Cys-35–Cys-50, Cys-52–Cys-63, Cys-69–Cys-83, Cys-77–Cys-92, Cys-94–Cys-106, Cys-112–Cys-126, Cys-120–Cys-135, Cys-137–Cys-148, Cys-150–Cys-161, Cys-155–Cys-170, Cys-174–Cys-267, Cys-195–Cys-282, Cys-217–Cys-255, Cys-223–Cys-287, Cys-248–Cys-256, Cys-297–Cys-306, Cys-300–Cys-315, Cys-317–Cys-347, Cys-335–Cys-425, and Cys-366–Cys-389. The N-linked (GlcNAc...) asparagine glycan is linked to Asn-38. The EGF-like 2; calcium-binding domain occupies 65–107; the sequence is DLDECAIPGAHNCSANSSCVNTPGSFSCVCPEGFRLSPGLGCT. N-linked (GlcNAc...) asparagine glycosylation is found at Asn-76 and Asn-80. In terms of domain architecture, EGF-like 3; calcium-binding spans 108-149; that stretch reads DVDECAEPGLSHCHALATCVNVVGSYLCVCPAGYRGDGWHCE. The beta hairpin stretch occupies residues 150–171; sequence CSPGSCGPGLDCVPEGDALVCA. The D10C stretch occupies residues 172–291; the sequence is DPCQAHRTLD…CHLAYCTDPS (120 aa). Asn-232 carries N-linked (GlcNAc...) (complex) asparagine glycosylation. Asn-275 is a glycosylation site (N-linked (GlcNAc...) (high mannose) asparagine). The region spanning 292–323 is the EGF-like 4 domain; the sequence is SVEGTCEECSIDEDCKSNNGRWHCQCKQDFNI. Residue Asn-322 is glycosylated (N-linked (GlcNAc...) (complex) asparagine). The tract at residues 334–429 is ZP-N; it reads ECGANDMKVS…KINFACSYPL (96 aa). The 256-residue stretch at 334-589 folds into the ZP domain; that stretch reads ECGANDMKVS…PTCSGTRFRS (256 aa). Asn-396 carries an N-linked (GlcNAc...) (complex) asparagine glycan. Positions 430–453 are flexible ZP-N/ZP-C linker; important for secretion and polymerization into filaments; that stretch reads DMKVSLKTALQPMVSALNIRVGGT. Positions 454 to 465 are internal hydrophobic patch (IHP); sequence GMFTVRMALFQT. Positions 454 to 589 are ZP-C; the sequence is GMFTVRMALF…PTCSGTRFRS (136 aa). 3 disulfide bridges follow: Cys-506-Cys-566, Cys-527-Cys-582, and Cys-571-Cys-578. Residue Asn-513 is glycosylated (N-linked (GlcNAc...) (complex) asparagine; alternate). N-linked (GlcNAc...) (high mannose) asparagine; alternate glycosylation occurs at Asn-513. The interval 586-589 is essential for cleavage by HPN; sequence RFRS. Positions 598–606 are external hydrophobic patch (EHP); regulates polymerization into filaments; the sequence is VLNLGPITR. Residue Ser-614 is the site of GPI-anchor amidated serine attachment. Positions 615–640 are cleaved as a propeptide — removed in mature form; sequence RAFSSLGLLKVWLPLLLSATLTLTFQ.

In terms of assembly, homodimer that then polymerizes into long filaments. The filaments can additionally assemble laterally to form a sheet. The filaments consist of a zigzag-shaped backbone with laterally protruding arms which interact with bacterial adhesin fimH. Two fimH molecules can bind to a single UMOD monomer. In terms of processing, N-glycosylated. N-glycan heterogeneity at Asn-232: Hex7HexNAc6 (major) and dHex1Hex7HexNAc6 (minor); at Asn-322: dHex1Hex6HexNAc5 (minor), dHex1Hex7HexNAc6 (major) and dHex1Hex8HexNAc7 (minor); at Asn-396: Hex6HexNAc5 (major), dHex1Hex6HexNAc5 (minor) and Hex7HexNAc6 (minor). Glycosylated Asn-232 interacts with E.coli adhesin fimH. Other complex glycosylation sites may serve as binding sites for proteins from other bacteria inclduding K.pneumoniae, P.aeruginosa and S.mitis. Proteolytically cleaved at a conserved C-terminal proteolytic cleavage site to generate the secreted form found in urine. This cleavage is catalyzed by HPN. As to expression, expressed in the tubular cells of the kidney. Most abundant protein in normal urine (at protein level). Synthesized exclusively in the kidney. Expressed exclusively by epithelial cells of the thick ascending limb of Henle's loop (TALH) and of distal convoluted tubule lumen.

It is found in the apical cell membrane. It localises to the basolateral cell membrane. The protein localises to the cell projection. Its subcellular location is the cilium membrane. The protein resides in the secreted. Functionally, functions in biogenesis and organization of the apical membrane of epithelial cells of the thick ascending limb of Henle's loop (TALH), where it promotes formation of complex filamentous gel-like structure that may play a role in the water barrier permeability. May serve as a receptor for binding and endocytosis of cytokines (IL-1, IL-2) and TNF. Facilitates neutrophil migration across renal epithelia. Its function is as follows. In the urine, may contribute to colloid osmotic pressure, retards passage of positively charged electrolytes, and inhibits formation of liquid containing supersaturated salts and subsequent formation of salt crystals. Protects against urinary tract infections by binding to type 1 fimbriated E.coli. Binds to bacterial adhesin fimH which mediates the stable formation of bacterial aggregates, prevents the binding of E.coli to uroplakins UPK1A and UPK1B which act as urothelial receptors for type I fimbriae, and allows for pathogen clearance through micturation. Also promotes aggregation of other bacteria including K.pneumoniae, P.aeruginosa and S.mitis and so may also protect against other uropathogens. The sequence is that of Uromodulin (UMOD) from Homo sapiens (Human).